Here is a 291-residue protein sequence, read N- to C-terminus: Transcription antitermination protein NusB (291 aa).

Belongs to the NusB family.

Functionally, involved in transcription antitermination. Required for transcription of ribosomal RNA (rRNA) genes. Binds specifically to the boxA antiterminator sequence of the ribosomal RNA (rrn) operons. The sequence is that of Transcription antitermination protein NusB from Synechococcus sp. (strain JA-2-3B'a(2-13)) (Cyanobacteria bacterium Yellowstone B-Prime).